The sequence spans 719 residues: MDALVNSFEDLNTSHTTSRYRAKRHHARTKSSPGSIKRNQSIRRHSRTLSTHYDSSNPYQDASTSYAQLSMGRRTEGSSTKPRPKSYVEPSHTQTQAHYATDSHHPSHSRSHSQTGHGPRATFRHHHHRSKSHTNPRSRFELRPQSHHETYTYLPDDPSPQFDEPNFSWMEEAENQLSELQSKYKPEPMAASTSLSWQIPDESHHLTSVAVHESSPLIAVGSGGKENNLFVYETTQDKGLIHHQTISLPAIHGLKWLSPSQQVADLGNILATSHSNGLAHLVLLPDCYSSDPAEILKRFNHKHHVSIKDTLSTRIKHLELTTPAWRSSVSSSLATLYSQHLFLWDPSRGDTPVLTRKVKRAEAFSLSPFQDGQVAAACGKYTSLLDLRAKSGSVNLLAGNTNLCAYSPMNSNLLATAHSDVSGLQENCVRIWDSRHTAGPLHKLEGHTDQIRSLEWSKFNPCELHTSSNDGSLRLWNIGRQQETKARPSLEVYSGDLAAQWDEQKASAQWLPRSARQMQQRGLAFNVAPLNIQKKEKKEKKPALYSSSVIAKTPHAAVASASFMPTGSMHPSVVTVDSYGSLGIHSMPSATPYNTEPETPRTLTARMSVQSFASTDMSSDFTEADMSSASDTSPMTSPSMASAATFQSSYDSPVKACIPEARPATYETSVSSSFIPPLQIKKRVPSGPRPEGSHVRRPSRESRNMLPELDLDFDFGLTA.

The interval 1 to 144 (MDALVNSFED…NPRSRFELRP (144 aa)) is disordered. Positions 18-29 (SRYRAKRHHART) are enriched in basic residues. Polar residues-rich tracts occupy residues 30–39 (KSSPGSIKRN) and 48–68 (TLSTHYDSSNPYQDASTSYAQ). The segment covering 122–136 (TFRHHHHRSKSHTNP) has biased composition (basic residues). WD repeat units follow at residues 201–242 (DESH…GLIH), 246–294 (ISLP…DPAE), 310–354 (TLST…TPVL), 396–442 (LLAG…GPLH), and 446–486 (GHTD…ETKA). Residues 677–707 (PLQIKKRVPSGPRPEGSHVRRPSRESRNMLP) form a disordered region. Positions 691–703 (EGSHVRRPSRESR) are enriched in basic and acidic residues.

The protein belongs to the WD repeat DSE1 family.

Involved in cell wall metabolism and required for the separation of the mother and daughter cells. The chain is Protein DSE1 (DSE1) from Yarrowia lipolytica (strain CLIB 122 / E 150) (Yeast).